A 78-amino-acid chain; its full sequence is D-alanyl carrier protein (78 aa).

The 78-residue stretch at M1–K78 folds into the Carrier domain. S36 carries the O-(pantetheine 4'-phosphoryl)serine modification.

The protein belongs to the DltC family. In terms of processing, 4'-phosphopantetheine is transferred from CoA to a specific serine of apo-DCP.

The protein localises to the cytoplasm. The protein operates within cell wall biogenesis; lipoteichoic acid biosynthesis. Functionally, carrier protein involved in the D-alanylation of lipoteichoic acid (LTA). The loading of thioester-linked D-alanine onto DltC is catalyzed by D-alanine--D-alanyl carrier protein ligase DltA. The DltC-carried D-alanyl group is further transferred to cell membrane phosphatidylglycerol (PG) by forming an ester bond, probably catalyzed by DltD. D-alanylation of LTA plays an important role in modulating the properties of the cell wall in Gram-positive bacteria, influencing the net charge of the cell wall. This Listeria monocytogenes serotype 4a (strain HCC23) protein is D-alanyl carrier protein.